Consider the following 825-residue polypeptide: Zinc finger protein 28 (825 aa).

The segment at 26–65 is disordered; the sequence is RPGGGPAAGTVVAPGSPDRGRPRSRNSLASQDQQGAVTSG. Residues 33 to 42 are compositionally biased toward low complexity; that stretch reads AGTVVAPGSP. The segment covering 51–65 has biased composition (polar residues); that stretch reads NSLASQDQQGAVTSG. The region spanning 103–174 is the KRAB domain; it reads VTFGDVAVVF…KRKMRKGQHL (72 aa). 14 consecutive C2H2-type zinc fingers follow at residues 377–399, 405–427, 433–456, 462–484, 490–512, 518–540, 546–568, 574–596, 602–624, 630–652, 658–680, 686–708, 714–736, and 742–764; these read FQCN…QRIH, YKCN…QRCH, YECP…RYYH, FDCI…RRIH, YTCE…QRIH, YECE…QRVH, FKCK…WRIH, FECG…QRIH, YECK…QKTH, YECK…QRVH, YKCL…RRLH, YECV…RRCH, YECS…QRIH, and YECK…KRVH. A C2H2-type 15; degenerate zinc finger spans residues 770-792; it reads YNYKKGRRAFRQTAHFAHHQQIH.

The protein belongs to the krueppel C2H2-type zinc-finger protein family. In terms of tissue distribution, expressed predominantly in ovary.

Its subcellular location is the nucleus. In terms of biological role, may be involved in transcriptional regulation. May have a role in embryonic development. The protein is Zinc finger protein 28 (Zfp28) of Mus musculus (Mouse).